Consider the following 536-residue polypeptide: Phosphoenolpyruvate carboxykinase (ATP) (536 aa).

Substrate contacts are provided by Arg-61, Tyr-195, and Lys-201. ATP is bound by residues Lys-201, His-220, and 236-244 (GLSGTGKTT). 2 residues coordinate Mn(2+): Lys-201 and His-220. Asp-257 provides a ligand contact to Mn(2+). The ATP site is built by Glu-285, Arg-322, and Thr-447. Arg-322 provides a ligand contact to substrate.

This sequence belongs to the phosphoenolpyruvate carboxykinase (ATP) family. The cofactor is Mn(2+).

The protein localises to the cytoplasm. The enzyme catalyses oxaloacetate + ATP = phosphoenolpyruvate + ADP + CO2. It participates in carbohydrate biosynthesis; gluconeogenesis. In terms of biological role, involved in the gluconeogenesis. Catalyzes the conversion of oxaloacetate (OAA) to phosphoenolpyruvate (PEP) through direct phosphoryl transfer between the nucleoside triphosphate and OAA. The polypeptide is Phosphoenolpyruvate carboxykinase (ATP) (Brucella melitensis biotype 1 (strain ATCC 23456 / CCUG 17765 / NCTC 10094 / 16M)).